The chain runs to 112 residues: Small ribosomal subunit protein bS16 (112 aa).

It belongs to the bacterial ribosomal protein bS16 family.

The polypeptide is Small ribosomal subunit protein bS16 (Aquifex aeolicus (strain VF5)).